Reading from the N-terminus, the 119-residue chain is Immunoglobulin heavy variable 3-73 (119 aa).

The N-terminal stretch at 1–19 (MEFGLSWVFLVAILKGVQC) is a signal peptide. Residues 20-44 (EVQLVESGGGLVQPGGSLKLSCAAS) form a framework-1 region. The Ig-like domain occupies 20–119 (EVQLVESGGG…EDTAVYYCTR (100 aa)). C41 and C117 are joined by a disulfide. Residues 45–52 (GFTFSGSA) are complementarity-determining-1. The interval 53 to 69 (MHWVRQASGKGLEWVGR) is framework-2. A complementarity-determining-2 region spans residues 70 to 79 (IRSKANSYAT). The framework-3 stretch occupies residues 80-117 (AYAASVKGRFTISRDDSKNTAYLQMNSLKTEDTAVYYC). The tract at residues 118-119 (TR) is complementarity-determining-3.

As to quaternary structure, immunoglobulins are composed of two identical heavy chains and two identical light chains; disulfide-linked.

The protein localises to the secreted. Its subcellular location is the cell membrane. Functionally, v region of the variable domain of immunoglobulin heavy chains that participates in the antigen recognition. Immunoglobulins, also known as antibodies, are membrane-bound or secreted glycoproteins produced by B lymphocytes. In the recognition phase of humoral immunity, the membrane-bound immunoglobulins serve as receptors which, upon binding of a specific antigen, trigger the clonal expansion and differentiation of B lymphocytes into immunoglobulins-secreting plasma cells. Secreted immunoglobulins mediate the effector phase of humoral immunity, which results in the elimination of bound antigens. The antigen binding site is formed by the variable domain of one heavy chain, together with that of its associated light chain. Thus, each immunoglobulin has two antigen binding sites with remarkable affinity for a particular antigen. The variable domains are assembled by a process called V-(D)-J rearrangement and can then be subjected to somatic hypermutations which, after exposure to antigen and selection, allow affinity maturation for a particular antigen. This is Immunoglobulin heavy variable 3-73 from Homo sapiens (Human).